The primary structure comprises 286 residues: Bifunctional protein FolD (286 aa).

NADP(+) is bound by residues 164–166 (GRS), serine 193, and isoleucine 234.

This sequence belongs to the tetrahydrofolate dehydrogenase/cyclohydrolase family. As to quaternary structure, homodimer.

The enzyme catalyses (6R)-5,10-methylene-5,6,7,8-tetrahydrofolate + NADP(+) = (6R)-5,10-methenyltetrahydrofolate + NADPH. It carries out the reaction (6R)-5,10-methenyltetrahydrofolate + H2O = (6R)-10-formyltetrahydrofolate + H(+). It participates in one-carbon metabolism; tetrahydrofolate interconversion. Functionally, catalyzes the oxidation of 5,10-methylenetetrahydrofolate to 5,10-methenyltetrahydrofolate and then the hydrolysis of 5,10-methenyltetrahydrofolate to 10-formyltetrahydrofolate. The polypeptide is Bifunctional protein FolD (Oleidesulfovibrio alaskensis (strain ATCC BAA-1058 / DSM 17464 / G20) (Desulfovibrio alaskensis)).